A 365-amino-acid chain; its full sequence is tRNA-specific 2-thiouridylase MnmA (365 aa).

ATP-binding positions include 6–13 (GMSGGVDS) and Met32. Residues 92–94 (NPD) are interaction with target base in tRNA. The active-site Nucleophile is the Cys97. Cys97 and Cys197 are oxidised to a cystine. ATP is bound at residue Gly121. The interaction with tRNA stretch occupies residues 147 to 149 (KDQ). Cys197 (cysteine persulfide intermediate) is an active-site residue. The interval 315-316 (RY) is interaction with tRNA.

The protein belongs to the MnmA/TRMU family.

It is found in the cytoplasm. The enzyme catalyses S-sulfanyl-L-cysteinyl-[protein] + uridine(34) in tRNA + AH2 + ATP = 2-thiouridine(34) in tRNA + L-cysteinyl-[protein] + A + AMP + diphosphate + H(+). Functionally, catalyzes the 2-thiolation of uridine at the wobble position (U34) of tRNA, leading to the formation of s(2)U34. In Azoarcus sp. (strain BH72), this protein is tRNA-specific 2-thiouridylase MnmA.